Reading from the N-terminus, the 132-residue chain is Large ribosomal subunit protein uL14 (132 aa).

It belongs to the universal ribosomal protein uL14 family. In terms of assembly, part of the 50S ribosomal subunit. Forms a cluster with proteins L3 and L24e, part of which may contact the 16S rRNA in 2 intersubunit bridges.

Binds to 23S rRNA. Forms part of two intersubunit bridges in the 70S ribosome. This chain is Large ribosomal subunit protein uL14, found in Halorubrum lacusprofundi (strain ATCC 49239 / DSM 5036 / JCM 8891 / ACAM 34).